Here is a 251-residue protein sequence, read N- to C-terminus: Copper transport protein CTR1 (251 aa).

Residues 90 to 110 traverse the membrane as a helical segment; sequence AFGIFVLLFFVAFLARMLEFV. Residues 157-173 show a composition bias toward basic and acidic residues; the sequence is DESIDKQNSPQHEETTK. The segment at 157-176 is disordered; sequence DESIDKQNSPQHEETTKARG. The chain crosses the membrane as a helical span at residues 208-228; the sequence is MLAAMTYTLTYFFAVVIGSGV.

Oligomer.

The protein localises to the cell membrane. Its function is as follows. Required for high affinity copper (probably reduced Cu I) transport into the cell. The chain is Copper transport protein CTR1 (CTR1) from Candida albicans (strain SC5314 / ATCC MYA-2876) (Yeast).